The chain runs to 105 residues: MICOS complex subunit Mic10 (105 aa).

Residues 29-46 (LLKVTGGVAIGIVASVAF) traverse the membrane as a helical segment. Over 47–105 (FKSRSWPIWFGSGVGLGTGWSNCRHDFASPYVLHGKRVPAGQDSQGKPAYNIITEQHKQ) the chain is Mitochondrial intermembrane. The tract at residues 85–105 (PAGQDSQGKPAYNIITEQHKQ) is disordered.

Belongs to the MICOS complex subunit Mic10 family. As to quaternary structure, component of the mitochondrial contact site and cristae organizing system (MICOS) complex.

The protein resides in the mitochondrion inner membrane. Component of the MICOS complex, a large protein complex of the mitochondrial inner membrane that plays crucial roles in the maintenance of crista junctions, inner membrane architecture, and formation of contact sites to the outer membrane. This Caenorhabditis elegans protein is MICOS complex subunit Mic10.